We begin with the raw amino-acid sequence, 4069 residues long: Cardiomyopathy-associated protein 5 (4069 aa).

Disordered regions lie at residues 1-177 (MASR…SQVL), 341-387 (TVPS…DTPA), 442-525 (GLAA…EDSN), 538-558 (ESPLVSEKPFPPHMSPEVEHK), 597-705 (EYSV…VPSL), 732-793 (PSEE…RFTP), 844-872 (SSPDLVVASEHSFPPHTTEMTSECQAPPL), 890-948 (LERY…FSPD), 979-1009 (TSPSEHTILSDEDTEEAELFSPDSASQVSIP), 1041-1097 (ADEE…PEIP), 1160-1179 (VKEETKPASPHSVLPDSVPA), 1205-1237 (RKEEIVPDSQEATAHVSQDQKMEPQPPNVPESE), 1540-1575 (KETELPSSQNVSPASKHIIPKGKDEETASSSPELEN), 1594-1742 (PAVE…EEFQ), 1757-1809 (HPAD…ITEP), 1892-1988 (ENWM…VKLA), 2064-2175 (TISS…KKGI), 2187-2259 (FGSS…SGDG), 2385-2412 (PQQPKSASSNFASKNITKESEKPESIIL), 2425-2463 (SEDRLKKEMQNPTSLKISEEETKLRSVSPTEKKDNLENR), 2494-2527 (TQITLGSRSTELKESKADAMPQHFYQNEDYNERP), 2653-2706 (QEGN…VGTQ), and 2750-2862 (SSRD…SDVP). Residues 27-47 (ETEEESEGEEDETAAESEEEP) show a composition bias toward acidic residues. Over residues 48-62 (DSRLSDQDEEGKIKQ) the composition is skewed to basic and acidic residues. Residues 84 to 119 (TWETNSSRSSTPWASEESQTSGVCSREGSTVNSPPG) are compositionally biased toward polar residues. Residues 130-153 (KVRKRTHKSKHGSPSLRRKGNRKR) show a composition bias toward basic residues. A Phosphoserine modification is found at serine 155. Polar residues-rich tracts occupy residues 156-177 (FESQDVPTNKKGSPLTSASQVL) and 341-350 (TVPSYSSSGR). The segment covering 489–499 (LEPSISLSEPL) has biased composition (low complexity). Residues 500 to 510 (MLEEPEKEEIE) show a composition bias toward acidic residues. The residue at position 631 (serine 631) is a Phosphoserine. Over residues 640-659 (AYSPAAAPTSESSLSPSTTE) the composition is skewed to low complexity. Composition is skewed to polar residues over residues 664-673 (NQSPLFSTVT), 692-701 (PDSTSASEYS), and 752-775 (PSLSPSTTEKTSECQSPLPSTATS). The span at 1049–1063 (TAATPVSEQFSSSQK) shows a compositional bias: polar residues. The segment covering 1085–1094 (DKSEKAEIKP) has biased composition (basic and acidic residues). Polar residues predominate over residues 1214 to 1223 (QEATAHVSQD). The segment covering 1621–1630 (EPEKKDKPHQ) has biased composition (basic and acidic residues). Residues 1639–1662 (SEFSSDLGRQSGSIGTKQAKSPIT) show a composition bias toward polar residues. 3 stretches are compositionally biased toward basic and acidic residues: residues 1668-1687 (VLEKGPAELRSREGKEENRE), 1704-1714 (LREESQNEEIK), and 1786-1795 (ILDKLSEETG). Residues 1796–1808 (HPNSSQVLQSITE) are compositionally biased toward polar residues. Residues 1935 to 1955 (SKDHTCEVRKQVLPHSAEESH) are compositionally biased toward basic and acidic residues. The span at 1956-1980 (LSSQEAVSALDTSSGNTETLSSKSY) shows a compositional bias: polar residues. A compositionally biased stretch (basic and acidic residues) spans 2085 to 2124 (NEKEAHRSTPPFPEEKPLEESKMVQSKVIDDADEGKKPSP). Polar residues predominate over residues 2145-2155 (SPESPEVTQNP). Composition is skewed to basic and acidic residues over residues 2162-2172 (AKPDLPEEKGK) and 2232-2250 (KPADHSLSEVKLKTADEPR). Over residues 2387–2399 (QPKSASSNFASKN) the composition is skewed to polar residues. Serine 2404 is subject to Phosphoserine. Over residues 2441-2461 (ISEEETKLRSVSPTEKKDNLE) the composition is skewed to basic and acidic residues. Composition is skewed to basic and acidic residues over residues 2661–2681 (KSSRDMPDHSEEKEQFRESEL), 2750–2769 (SSRDMPDHSEEKEQFKESEL), and 2777–2804 (ITKESMKEGFPSKESERTLARPFDETKS). Serine 2813 is subject to Phosphoserine. Positions 2830-2847 (AVKKKEMPRSELTPERHT) are enriched in basic and acidic residues. The stretch at 2964–2988 (SIDQEESEQMQDKLEYLEEKASFKT) forms a coiled coil. Over residues 3015–3031 (PLKENKQKETHKTKEEI) the composition is skewed to basic and acidic residues. Disordered regions lie at residues 3015 to 3037 (PLKENKQKETHKTKEEISTDSET), 3119 to 3156 (EKGHNILSHPETQSQNSADRNVSKDTKRDVDSKSPGMP), 3204 to 3231 (KKKEEETASEGDSVNSEASFPSRNSDTD), 3386 to 3421 (SGATHVQETSLEEPKILVPPEPSEERLRNSPVQDEY), and 3465 to 3495 (EFASEAEQSTPAEQKELGSERKEEDQLSSEV). Residues 3052–3365 (YFEKYTLIDY…GSHGNEVGNA (314 aa)) are required for RYR2 clustering. Residues 3128 to 3138 (PETQSQNSADR) show a composition bias toward polar residues. Over residues 3139 to 3150 (NVSKDTKRDVDS) the composition is skewed to basic and acidic residues. Over residues 3213–3227 (EGDSVNSEASFPSRN) the composition is skewed to polar residues. At serine 3228 the chain carries Phosphoserine. The span at 3477–3489 (EQKELGSERKEED) shows a compositional bias: basic and acidic residues. Residues 3517–3544 (KCPISATDKVFGTHKDHEVSTLDTAISA) form an amphipathic helix H1 region. The stretch at 3544 to 3653 (AVKVQLAEFL…REAEELDEAV (110 aa)) forms a coiled coil. The B-box coiled-coil; BBC stretch occupies residues 3545-3672 (VKVQLAEFLE…ERLLSAMEST (128 aa)). The amphipathic helix H2 stretch occupies residues 3631–3648 (SMDTAKDTLETIVREAEE). Fibronectin type-III domains follow at residues 3704-3805 (VPQP…TAPS) and 3806-3898 (TPVI…TRGT). Positions 3751–3767 (EVNELVEEYRLTVKESY) are amphipathic helix H3. Residues 3880 to 4065 (NAFGTSEQSE…LHLGIEPPDS (186 aa)) enclose the B30.2/SPRY domain.

In terms of assembly, interacts with PRKAR2A. Interacts with ACTN2 and DTNBP1/dysbindin. Interacts with DES. Interacts with DMD/dystrophin. Interacts with the calcineurin catalytic subunit PPP3CA. Interacts with TTN. Interacts with CAPN3; this interaction, which results in CMYA5 proteolysis, may protect CAPN3 from autolysis. Interacts with FSD2. Identified in a complex composed of FSD2, CMYA5 and RYR2. Phosphorylated by PKA. Expressed in skeletal muscle; at a strong level and in heart.

Its subcellular location is the nucleus. It is found in the sarcoplasmic reticulum. It localises to the cytoplasm. The protein resides in the perinuclear region. The protein localises to the myofibril. Its subcellular location is the sarcomere. It is found in the m line. Its function is as follows. May serve as an anchoring protein that mediates the subcellular compartmentation of protein kinase A (PKA) via binding to PRKAR2A. May function as a repressor of calcineurin-mediated transcriptional activity. May attenuate calcineurin ability to induce slow-fiber gene program in muscle and may negatively modulate skeletal muscle regeneration. Plays a role in the assembly of ryanodine receptor (RYR2) clusters in striated muscle. The sequence is that of Cardiomyopathy-associated protein 5 (CMYA5) from Homo sapiens (Human).